The primary structure comprises 314 residues: Transcription factor SOX-12 (314 aa).

2 disordered regions span residues 1–40 and 101–287; these read MVQQ…SGHI and MADY…FEFP. The HMG box DNA-binding region spans 40–108; it reads IKRPMNAFMV…KHMADYPDYK (69 aa). Residues 149–159 are compositionally biased toward gly residues; the sequence is RASGGPLGGGA. A compositionally biased stretch (acidic residues) spans 162 to 173; the sequence is PEDDDEDEEEEL. Residues 174-187 are compositionally biased toward basic and acidic residues; sequence LEVRLLETPGRELW. The segment covering 191–217 has biased composition (low complexity); sequence PAGRAARGPAERAQGPSGEGAAASAAS. Residues 221–243 are compositionally biased toward acidic residues; that stretch reads SEDEEPEEEEEEAATAEEGEEET. Residues 282–314 form a required for transcriptional activation activity and synergistic coactivation of transcriptional activity with POU3F2 region; it reads SHFEFPDYCTPEVTEMIAGDWRSSSIADLVFTY.

As to expression, expressed in splenic and thymic regulatory T-cells (at protein level). Expressed in embryonic molar and incisor teeth.

It is found in the nucleus. Transcription factor that binds to DNA at the consensus sequence 5'-ACCAAAG-3'. Acts as a transcriptional activator. Binds cooperatively with POU3F2/BRN2 or POU3F1/OCT6 to gene promoters, which enhances transcriptional activation. Involved in the differentiation of naive CD4-positive T-cells into peripherally induced regulatory T (pT reg) cells under inflammatory conditions. Binds to the promoter region of the FOXP3 gene and promotes its transcription, and might thereby contribute to pT reg cell differentiation in the spleen and lymph nodes during inflammation. Plays a redundant role with SOX4 and SOX11 in cell survival of developing tissues such as the neural tube, branchial arches and somites, thereby contributing to organogenesis. The protein is Transcription factor SOX-12 (Sox12) of Mus musculus (Mouse).